The sequence spans 255 residues: FMR1 neighbor protein (255 aa).

Residues M1–P68 are Cytoplasmic-facing. Residues F69–Y89 traverse the membrane as a helical segment. Over L90–Q183 the chain is Extracellular. The 60-residue stretch at L125–M184 folds into the P-type domain. The chain crosses the membrane as a helical span at residues M184–C204. The Cytoplasmic segment spans residues R205–E255. Residues Q220–E255 form a disordered region. Positions K229–K238 are enriched in basic residues.

Testis-specific. Expressed in melanoma, sarcoma, lung, breast, bladder, esophageal and ovarian cancers.

Its subcellular location is the membrane. The sequence is that of FMR1 neighbor protein from Homo sapiens (Human).